The following is a 360-amino-acid chain: Phospho-N-acetylmuramoyl-pentapeptide-transferase (360 aa).

Helical transmembrane passes span 24 to 44 (RAVM…PWTI), 69 to 89 (GTPT…TLLW), 92 to 112 (WANP…ALGF), 133 to 153 (MVWQ…LAAN), 158 to 178 (ILIV…GFLV), 199 to 219 (GLAT…AYAS), 239 to 259 (VVIF…FNAY), 263 to 283 (VFMG…VAVI), 288 to 308 (FVLV…MLQV), and 337 to 357 (QVVV…LSTL).

The protein belongs to the glycosyltransferase 4 family. MraY subfamily. Requires Mg(2+) as cofactor.

It is found in the cell inner membrane. It catalyses the reaction UDP-N-acetyl-alpha-D-muramoyl-L-alanyl-gamma-D-glutamyl-meso-2,6-diaminopimeloyl-D-alanyl-D-alanine + di-trans,octa-cis-undecaprenyl phosphate = di-trans,octa-cis-undecaprenyl diphospho-N-acetyl-alpha-D-muramoyl-L-alanyl-D-glutamyl-meso-2,6-diaminopimeloyl-D-alanyl-D-alanine + UMP. It participates in cell wall biogenesis; peptidoglycan biosynthesis. Functionally, catalyzes the initial step of the lipid cycle reactions in the biosynthesis of the cell wall peptidoglycan: transfers peptidoglycan precursor phospho-MurNAc-pentapeptide from UDP-MurNAc-pentapeptide onto the lipid carrier undecaprenyl phosphate, yielding undecaprenyl-pyrophosphoryl-MurNAc-pentapeptide, known as lipid I. In Neisseria meningitidis serogroup C / serotype 2a (strain ATCC 700532 / DSM 15464 / FAM18), this protein is Phospho-N-acetylmuramoyl-pentapeptide-transferase.